Here is a 291-residue protein sequence, read N- to C-terminus: Citrate lyase subunit beta (291 aa).

Residues Arg66 and Glu129 each contribute to the substrate site. The Mg(2+) site is built by Glu129 and Asp156.

Belongs to the HpcH/HpaI aldolase family. Citrate lyase beta subunit subfamily. As to quaternary structure, oligomer with a subunit composition of (alpha,beta,gamma)6. Mg(2+) is required as a cofactor.

It localises to the cytoplasm. The catalysed reaction is citrate = oxaloacetate + acetate. The enzyme catalyses (3S)-citryl-CoA = oxaloacetate + acetyl-CoA. Its function is as follows. Represents a citryl-ACP lyase. This chain is Citrate lyase subunit beta (citE), found in Haemophilus influenzae (strain ATCC 51907 / DSM 11121 / KW20 / Rd).